Here is a 431-residue protein sequence, read N- to C-terminus: UDP-N-acetylmuramate--L-alanine ligase (431 aa).

Position 108–114 (108–114 (GAHGKST)) interacts with ATP.

Belongs to the MurCDEF family.

The protein resides in the cytoplasm. The enzyme catalyses UDP-N-acetyl-alpha-D-muramate + L-alanine + ATP = UDP-N-acetyl-alpha-D-muramoyl-L-alanine + ADP + phosphate + H(+). The protein operates within cell wall biogenesis; peptidoglycan biosynthesis. Cell wall formation. In Campylobacter jejuni subsp. doylei (strain ATCC BAA-1458 / RM4099 / 269.97), this protein is UDP-N-acetylmuramate--L-alanine ligase.